Reading from the N-terminus, the 412-residue chain is Multifunctional CCA protein (412 aa).

2 residues coordinate ATP: glycine 8 and arginine 11. Residues glycine 8 and arginine 11 each coordinate CTP. Mg(2+)-binding residues include aspartate 21 and aspartate 23. Positions 91, 137, and 140 each coordinate ATP. 3 residues coordinate CTP: arginine 91, arginine 137, and arginine 140. The HD domain maps to 225 to 326; that stretch reads TGIHVMMVID…ADMLQATDAY (102 aa).

The protein belongs to the tRNA nucleotidyltransferase/poly(A) polymerase family. Bacterial CCA-adding enzyme type 1 subfamily. As to quaternary structure, monomer. Can also form homodimers and oligomers. It depends on Mg(2+) as a cofactor. Requires Ni(2+) as cofactor.

The enzyme catalyses a tRNA precursor + 2 CTP + ATP = a tRNA with a 3' CCA end + 3 diphosphate. It carries out the reaction a tRNA with a 3' CCA end + 2 CTP + ATP = a tRNA with a 3' CCACCA end + 3 diphosphate. Catalyzes the addition and repair of the essential 3'-terminal CCA sequence in tRNAs without using a nucleic acid template. Adds these three nucleotides in the order of C, C, and A to the tRNA nucleotide-73, using CTP and ATP as substrates and producing inorganic pyrophosphate. tRNA 3'-terminal CCA addition is required both for tRNA processing and repair. Also involved in tRNA surveillance by mediating tandem CCA addition to generate a CCACCA at the 3' terminus of unstable tRNAs. While stable tRNAs receive only 3'-terminal CCA, unstable tRNAs are marked with CCACCA and rapidly degraded. This chain is Multifunctional CCA protein, found in Nitrosomonas europaea (strain ATCC 19718 / CIP 103999 / KCTC 2705 / NBRC 14298).